We begin with the raw amino-acid sequence, 201 residues long: Probable nicotinate-nucleotide adenylyltransferase (201 aa).

The protein belongs to the NadD family.

The enzyme catalyses nicotinate beta-D-ribonucleotide + ATP + H(+) = deamido-NAD(+) + diphosphate. It functions in the pathway cofactor biosynthesis; NAD(+) biosynthesis; deamido-NAD(+) from nicotinate D-ribonucleotide: step 1/1. Catalyzes the reversible adenylation of nicotinate mononucleotide (NaMN) to nicotinic acid adenine dinucleotide (NaAD). The chain is Probable nicotinate-nucleotide adenylyltransferase from Clostridium botulinum (strain ATCC 19397 / Type A).